Reading from the N-terminus, the 468-residue chain is ATP synthase subunit beta (468 aa).

An ATP-binding site is contributed by 155–162 (GGAGVGKT).

It belongs to the ATPase alpha/beta chains family. F-type ATPases have 2 components, CF(1) - the catalytic core - and CF(0) - the membrane proton channel. CF(1) has five subunits: alpha(3), beta(3), gamma(1), delta(1), epsilon(1). CF(0) has three main subunits: a(1), b(2) and c(9-12). The alpha and beta chains form an alternating ring which encloses part of the gamma chain. CF(1) is attached to CF(0) by a central stalk formed by the gamma and epsilon chains, while a peripheral stalk is formed by the delta and b chains.

Its subcellular location is the cell membrane. It catalyses the reaction ATP + H2O + 4 H(+)(in) = ADP + phosphate + 5 H(+)(out). Functionally, produces ATP from ADP in the presence of a proton gradient across the membrane. The catalytic sites are hosted primarily by the beta subunits. This chain is ATP synthase subunit beta, found in Streptococcus pyogenes serotype M3 (strain ATCC BAA-595 / MGAS315).